The following is an 849-amino-acid chain: Ribosome biogenesis protein ERB1 (849 aa).

The tract at residues 1–130 (MARNSIKKSP…PKDDDLSRIN (130 aa)) is disordered. Composition is skewed to acidic residues over residues 29–44 (EAEEDSNDEESEDELN) and 51–123 (ASDD…EPKD). Residues 286–405 (RFVPSKHEAK…LRQVPGYQDS (120 aa)) are required for interaction with NOP7. Positions 405 to 441 (SVRERFERSLDLYLAPRVRHNKLNIDPDSLIPDLPSP) are required for interaction with YTM1. 2 WD repeats span residues 457–496 (GHTGKIRTISIDPQGLWLATGSDDGSVRIWEILTGRQVYK) and 505–545 (NNED…FDIE). A compositionally biased stretch (basic and acidic residues) spans 569–581 (KISSQKEEDNKES). The segment at 569–619 (KISSQKEEDNKESDNEDEDEEEDNDDDDDDDEPETSSTVEPKKEVAKWYPP) is disordered. Over residues 582 to 602 (DNEDEDEEEDNDDDDDDDEPE) the composition is skewed to acidic residues. WD repeat units lie at residues 633–675 (QCRK…SQSP), 678–716 (KSKGIIMDAKFHPFKPQLFVASQRQIKIYDLAQQVLLKK), 719–758 (PGVRLLSTIDIHPRGDNLIAGSYDKRVLWHDLDLSATPYK), 762–802 (YHEK…DLMT), and 818–849 (INQIGILDLIWHPKEPWLFSAGADGTARLWTT).

Belongs to the WD repeat BOP1/ERB1 family. In terms of assembly, component of the NOP7 complex, composed of ERB1, NOP7 and YTM1. The complex is held together by ERB1, which interacts with NOP7 via its N-terminal domain and with YTM1 via a high-affinity interaction between the seven-bladed beta-propeller domains of the 2 proteins. The NOP7 complex associates with the 66S pre-ribosome.

Its subcellular location is the nucleus. The protein localises to the nucleolus. It is found in the nucleoplasm. Functionally, component of the NOP7 complex, which is required for maturation of the 25S and 5.8S ribosomal RNAs and formation of the 60S ribosome. The chain is Ribosome biogenesis protein ERB1 from Candida albicans (strain SC5314 / ATCC MYA-2876) (Yeast).